Consider the following 191-residue polypeptide: Fe/S biogenesis protein NfuA (191 aa).

[4Fe-4S] cluster is bound by residues Cys-149 and Cys-152.

This sequence belongs to the NfuA family. Homodimer. The cofactor is [4Fe-4S] cluster.

Its function is as follows. Involved in iron-sulfur cluster biogenesis. Binds a 4Fe-4S cluster, can transfer this cluster to apoproteins, and thereby intervenes in the maturation of Fe/S proteins. Could also act as a scaffold/chaperone for damaged Fe/S proteins. The polypeptide is Fe/S biogenesis protein NfuA (Pseudoalteromonas translucida (strain TAC 125)).